Reading from the N-terminus, the 451-residue chain is MPIHIGSSIPLMVEKMLTEMVKPSKHIPQQTLNLSTLDNDPYNEVIYKACYVFKAKNVADDDNRPEALLREALSDLLGYYYPLSGSLKRQESDRKLQLSCGGDGGGVPFTVATANVELSSLKNLENIDSDTALNFLPVLHVDIDGYRPFALQVTKFECGGFILGMAMSHAMCDGYGEGHIMCALTDLAGGKKKPMVTPIWERERLVGKPEDDQPPFVPGDDTAASPYLPTDDWVTEKITIRADSIRRLKEATLKEYDFSNETITTFEVIGAYLWKSRVKALNLDRDGVTVLGLSVGIRNVVDPPLPDGYYGNAYIDMYVPLTAREVEEFTISDIVKLIKEAKRNAHDKDYLQEELANTEKIIKMNLTIKGKKDGLFCLTDWRNIGIFGSMDFGWDEPVNIVPVVPSETARTVNMFMRPSRLESDMVGGVQIVVTLPRIAMVKFKEEMEALE.

Positions 47, 169, 294, 316, and 378 each coordinate spermidine. H169 (proton acceptor) is an active-site residue. D391 functions as the Proton acceptor in the catalytic mechanism.

The protein belongs to the plant acyltransferase family. As to quaternary structure, monomer. As to expression, predominantly expressed in siliques, especially in seeds around the embryo, and, at low levels, in flowers. Barely detectable in stems, leaves, and roots.

It catalyses the reaction 2 (E)-sinapoyl-CoA + spermidine = N(1),N(8)-bis[(E)-sinapoyl]-spermidine + 2 CoA + 2 H(+). Its pathway is amine and polyamine metabolism; spermidine metabolism. In terms of biological role, spermidine sinapoyl-CoA acyltransferase that mediates the accumulation of disinapoyl spermidine conjugates in seeds. Catalyzes the two conjugating steps required for the biosynthesis of N1,N8-disipanoyl-spermidine. Can also use putrescine as an acyl acceptor to convert it into monosinapoyl-putrescine. The polypeptide is Spermidine sinapoyl-CoA acyltransferase (Arabidopsis thaliana (Mouse-ear cress)).